A 150-amino-acid polypeptide reads, in one-letter code: Large ribosomal subunit protein uL15 (150 aa).

The disordered stretch occupies residues 1–58; that stretch reads MNLSGIKPPKGQVKTKKRIGRGMGSGHGKTATRGSKGQHAGTGFSQKRGFEGGQMPLH.

Belongs to the universal ribosomal protein uL15 family. As to quaternary structure, part of the 50S ribosomal subunit.

Functionally, binds to the 23S rRNA. The protein is Large ribosomal subunit protein uL15 of Solibacter usitatus (strain Ellin6076).